Reading from the N-terminus, the 418-residue chain is Tyrosine--tRNA ligase (418 aa).

Residue Tyr-38 participates in L-tyrosine binding. Positions 43-52 (CTARSLHIGS) match the 'HIGH' region motif. L-tyrosine contacts are provided by Tyr-175 and Gln-179. The short motif at 235–239 (KMGKT) is the 'KMSKS' region element. An ATP-binding site is contributed by Lys-238. The S4 RNA-binding domain maps to 348 to 413 (LSVVKLLQVS…CGKKRHLKVV (66 aa)).

Belongs to the class-I aminoacyl-tRNA synthetase family. TyrS type 1 subfamily. Homodimer.

The protein resides in the cytoplasm. It carries out the reaction tRNA(Tyr) + L-tyrosine + ATP = L-tyrosyl-tRNA(Tyr) + AMP + diphosphate + H(+). Catalyzes the attachment of tyrosine to tRNA(Tyr) in a two-step reaction: tyrosine is first activated by ATP to form Tyr-AMP and then transferred to the acceptor end of tRNA(Tyr). This Ehrlichia ruminantium (strain Gardel) protein is Tyrosine--tRNA ligase.